We begin with the raw amino-acid sequence, 348 residues long: Probable dual-specificity RNA methyltransferase RlmN (348 aa).

The active-site Proton acceptor is the Glu-89. The region spanning 95-330 (ERDHYTLCVS…NFVRFSKGVE (236 aa)) is the Radical SAM core domain. Cys-102 and Cys-335 are joined by a disulfide. The [4Fe-4S] cluster site is built by Cys-109, Cys-113, and Cys-116. S-adenosyl-L-methionine contacts are provided by residues 157 to 158 (GE), Ser-189, 214 to 216 (SLN), and Asn-292. Cys-335 functions as the S-methylcysteine intermediate in the catalytic mechanism.

This sequence belongs to the radical SAM superfamily. RlmN family. It depends on [4Fe-4S] cluster as a cofactor.

The protein resides in the cytoplasm. The enzyme catalyses adenosine(2503) in 23S rRNA + 2 reduced [2Fe-2S]-[ferredoxin] + 2 S-adenosyl-L-methionine = 2-methyladenosine(2503) in 23S rRNA + 5'-deoxyadenosine + L-methionine + 2 oxidized [2Fe-2S]-[ferredoxin] + S-adenosyl-L-homocysteine. It carries out the reaction adenosine(37) in tRNA + 2 reduced [2Fe-2S]-[ferredoxin] + 2 S-adenosyl-L-methionine = 2-methyladenosine(37) in tRNA + 5'-deoxyadenosine + L-methionine + 2 oxidized [2Fe-2S]-[ferredoxin] + S-adenosyl-L-homocysteine. Its function is as follows. Specifically methylates position 2 of adenine 2503 in 23S rRNA and position 2 of adenine 37 in tRNAs. The sequence is that of Probable dual-specificity RNA methyltransferase RlmN from Aquifex aeolicus (strain VF5).